A 76-amino-acid chain; its full sequence is Omega-conotoxin-like TeAr94 (76 aa).

Residues 1–22 (MKLTCMMIVAVLFLTAWTFVTA) form the signal peptide. A propeptide spanning residues 23–50 (VPHSSNALENLYLKAHHEMNNPEDSELN) is cleaved from the precursor. Cystine bridges form between Cys53–Cys67, Cys60–Cys71, and Cys66–Cys75.

It belongs to the conotoxin O1 superfamily. Expressed by the venom duct.

It localises to the secreted. Functionally, omega-conotoxins act at presynaptic membranes, they bind and block voltage-gated calcium channels. The protein is Omega-conotoxin-like TeAr94 of Conus textile (Cloth-of-gold cone).